Here is a 343-residue protein sequence, read N- to C-terminus: MIKLSNITKVFHQGTRIIQALNNVSLHVPAGQIYGVIGASGAGKSTLIRCVNLLERPTEGSVLVDGQELTTLSESELTKARRQIGMIFQHFNLLSSRTVFGNVALPLELDNTPKDEIKRRVTELLSLVGLGDKHDSYPSNLSGGQKQRVAIARALASNPKVLLCDEATSALDPATTRSILELLKDINRRLGLTILLITHEMDVVKRICDCVAVISNGELIEQDTVSEVFSHPKTPLAQKFIQSTLHLDIPEDYQERLQAEPFTDCVPMLRLEFTGQSVDAPLLSETARRFNVNNNIISAQMDYAGGVKFGIMLTEMHGTQQDTQAAIAWLQEHHVKVEVLGYV.

In terms of domain architecture, ABC transporter spans 2–241 (IKLSNITKVF…PKTPLAQKFI (240 aa)). Position 38-45 (38-45 (GASGAGKS)) interacts with ATP.

This sequence belongs to the ABC transporter superfamily. Methionine importer (TC 3.A.1.24) family. As to quaternary structure, the complex is composed of two ATP-binding proteins (MetN), two transmembrane proteins (MetI) and a solute-binding protein (MetQ).

It is found in the cell inner membrane. It catalyses the reaction L-methionine(out) + ATP + H2O = L-methionine(in) + ADP + phosphate + H(+). It carries out the reaction D-methionine(out) + ATP + H2O = D-methionine(in) + ADP + phosphate + H(+). Functionally, part of the ABC transporter complex MetNIQ involved in methionine import. Responsible for energy coupling to the transport system. The chain is Methionine import ATP-binding protein MetN from Shigella boydii serotype 4 (strain Sb227).